We begin with the raw amino-acid sequence, 479 residues long: UDP-N-acetylmuramoyl-L-alanyl-D-glutamate--2,6-diaminopimelate ligase (479 aa).

Ser-21 lines the UDP-N-acetyl-alpha-D-muramoyl-L-alanyl-D-glutamate pocket. Gly-98 to Ser-104 is a binding site for ATP. UDP-N-acetyl-alpha-D-muramoyl-L-alanyl-D-glutamate is bound by residues Thr-144 to Thr-145, Ser-171, Gln-177, and Arg-179. Lys-211 carries the N6-carboxylysine modification. Meso-2,6-diaminopimelate contacts are provided by residues Arg-372, Asp-396–Arg-399, Gly-446, and Glu-450. The short motif at Asp-396–Arg-399 is the Meso-diaminopimelate recognition motif element.

It belongs to the MurCDEF family. MurE subfamily. The cofactor is Mg(2+). In terms of processing, carboxylation is probably crucial for Mg(2+) binding and, consequently, for the gamma-phosphate positioning of ATP.

The protein localises to the cytoplasm. The catalysed reaction is UDP-N-acetyl-alpha-D-muramoyl-L-alanyl-D-glutamate + meso-2,6-diaminopimelate + ATP = UDP-N-acetyl-alpha-D-muramoyl-L-alanyl-gamma-D-glutamyl-meso-2,6-diaminopimelate + ADP + phosphate + H(+). It participates in cell wall biogenesis; peptidoglycan biosynthesis. Catalyzes the addition of meso-diaminopimelic acid to the nucleotide precursor UDP-N-acetylmuramoyl-L-alanyl-D-glutamate (UMAG) in the biosynthesis of bacterial cell-wall peptidoglycan. This is UDP-N-acetylmuramoyl-L-alanyl-D-glutamate--2,6-diaminopimelate ligase from Rickettsia rickettsii.